The chain runs to 327 residues: DNA-directed RNA polymerase subunit alpha (327 aa).

The interval 1–233 (MQGSVTEFLK…EQLEAFVDLR (233 aa)) is alpha N-terminal domain (alpha-NTD). Residues 247 to 327 (FDPVLLRPVD…NWPPLGFIDK (81 aa)) are alpha C-terminal domain (alpha-CTD).

The protein belongs to the RNA polymerase alpha chain family. In terms of assembly, homodimer. The RNAP catalytic core consists of 2 alpha, 1 beta, 1 beta' and 1 omega subunit. When a sigma factor is associated with the core the holoenzyme is formed, which can initiate transcription.

The catalysed reaction is RNA(n) + a ribonucleoside 5'-triphosphate = RNA(n+1) + diphosphate. Functionally, DNA-dependent RNA polymerase catalyzes the transcription of DNA into RNA using the four ribonucleoside triphosphates as substrates. The protein is DNA-directed RNA polymerase subunit alpha of Baumannia cicadellinicola subsp. Homalodisca coagulata.